We begin with the raw amino-acid sequence, 231 residues long: RING finger protein 141 (231 aa).

Glycine 2 carries N-myristoyl glycine lipidation. An RING-type zinc finger spans residues 156–193 (CCICMDGRADLILPCAHSFCQKCIDKWSDRHRNCPICR).

It localises to the membrane. Functionally, may be involved in spermatogenesis. In Canis lupus familiaris (Dog), this protein is RING finger protein 141 (RNF141).